A 408-amino-acid chain; its full sequence is Pleckstrin homology domain-containing family O member 1 (408 aa).

The segment at 1–21 (MKKSGSGKRGPPDGNHQSAAP) is disordered. The PH domain maps to 20–131 (APEKVGWVRK…WINALSSAIT (112 aa)). The interaction with capping proteins (CPs) stretch occupies residues 132–192 (RAKNRILDEV…MLTLDLIQEE (61 aa)). Positions 135 to 307 (NRILDEVTVE…PAQPGQLSRI (173 aa)) are interaction with ATM, CKIP, IFP35 and NMI. The disordered stretch occupies residues 217-264 (LAGSRRRADSDRIQPSSQRASSLSRPWEKPDKGAPYTPQALKKFPSTE). The residue at position 226 (Ser226) is a Phosphoserine. Polar residues predominate over residues 229–240 (IQPSSQRASSLS). Ser270 and Ser341 each carry phosphoserine. The segment at 307-408 (IQDLVARKLE…QHSQYRKSLM (102 aa)) is negative regulator of AP-1 activity. Disordered stretches follow at residues 325 to 348 (VQGL…SESE) and 389 to 408 (TPDS…KSLM). The span at 389–401 (TPDSHLRQTSQHS) shows a compositional bias: polar residues.

In terms of assembly, heterodimer or homodimer. Interacts with CK2 and actin capping subunits (capping protein CP-alpha and CP-beta). CKIP1 and CK2 together inhibit the activity of actin capping protein at the barbed ends of actin filaments. Interacts with ATM, IFP35, JUN, JUND, NMI and PI3K. Interacts with AKT1, AKT2 and AKT3 (each isozyme of PKB), PtdIns(3,5)P2, PtdIns(4,5)P2 and PtdIns(3,4,5)P2. Post-translationally, C-terminal fragments could be released during apoptosis via caspase-3-dependent cleavage.

The protein localises to the cell membrane. Its subcellular location is the nucleus. It localises to the cytoplasm. Plays a role in the regulation of the actin cytoskeleton through its interactions with actin capping protein (CP). May function to target CK2 to the plasma membrane thereby serving as an adapter to facilitate the phosphorylation of CP by protein kinase 2 (CK2). Appears to target ATM to the plasma membrane. Appears to also inhibit tumor cell growth by inhibiting AKT-mediated cell-survival. Also implicated in PI3K-regulated muscle differentiation, the regulation of AP-1 activity (plasma membrane bound AP-1 regulator that translocates to the nucleus) and the promotion of apoptosis induced by tumor necrosis factor TNF. When bound to PKB, it inhibits it probably by decreasing PKB level of phosphorylation. The chain is Pleckstrin homology domain-containing family O member 1 (Plekho1) from Mus musculus (Mouse).